Here is a 393-residue protein sequence, read N- to C-terminus: Chalcone synthase (393 aa).

Cysteine 164 is a catalytic residue.

This sequence belongs to the thiolase-like superfamily. Chalcone/stilbene synthases family.

The enzyme catalyses (E)-4-coumaroyl-CoA + 3 malonyl-CoA + 3 H(+) = 2',4,4',6'-tetrahydroxychalcone + 3 CO2 + 4 CoA. The protein operates within secondary metabolite biosynthesis; flavonoid biosynthesis. In terms of biological role, the primary product of this enzyme is 4,2',4',6'-tetrahydroxychalcone (also termed naringenin-chalcone or chalcone) which can under specific conditions spontaneously isomerize into naringenin. In Vitis vinifera (Grape), this protein is Chalcone synthase (CHS).